The primary structure comprises 66 residues: MADTPSVEPTRIDPKLLELLVCPLTKGRLEYDSARQELISRSAKLAYPIRDGIPIMLPEEARPLAE.

The protein belongs to the UPF0434 family.

The polypeptide is UPF0434 protein M446_0487 (Methylobacterium sp. (strain 4-46)).